A 66-amino-acid polypeptide reads, in one-letter code: DNA-directed RNA polymerase subunit Rpo10 (66 aa).

Residues C7, C10, C44, and C45 each coordinate Zn(2+).

The protein belongs to the archaeal Rpo10/eukaryotic RPB10 RNA polymerase subunit family. Part of the RNA polymerase complex. The cofactor is Zn(2+).

It is found in the cytoplasm. It carries out the reaction RNA(n) + a ribonucleoside 5'-triphosphate = RNA(n+1) + diphosphate. Functionally, DNA-dependent RNA polymerase (RNAP) catalyzes the transcription of DNA into RNA using the four ribonucleoside triphosphates as substrates. This Saccharolobus islandicus (strain Y.N.15.51 / Yellowstone #2) (Sulfolobus islandicus) protein is DNA-directed RNA polymerase subunit Rpo10.